A 263-amino-acid polypeptide reads, in one-letter code: Proliferating cell nuclear antigen (263 aa).

A DNA-binding region spans residues 61-80; sequence RCDRNLSMGMNLNNMAKMLR.

It belongs to the PCNA family. As to quaternary structure, homotrimer. Interacts with FEN1A. Interacts with POLL. Interacts with RAD/GEN1. Interacts with DJA7 and DJA8. In terms of tissue distribution, expressed in proliferating tissues. Expressed in roots and root apex. Expressed at low levels in young leaves. Not detected in mature leaves. Highly expressed in shoot apical meristem (SAM). Expressed in flag leaves and panicles.

The protein localises to the nucleus. Functionally, this protein is an auxiliary protein of DNA polymerase delta and is involved in the control of eukaryotic DNA replication by increasing the polymerase's processibility during elongation of the leading strand. This Oryza sativa subsp. japonica (Rice) protein is Proliferating cell nuclear antigen.